The primary structure comprises 106 residues: NADH-quinone oxidoreductase subunit K (106 aa).

3 helical membrane passes run 8-28 (IGIE…IFGV), 35-55 (IIMF…FVAF), and 66-86 (VFVF…LAIL).

Belongs to the complex I subunit 4L family. NDH-1 is composed of 14 different subunits. Subunits NuoA, H, J, K, L, M, N constitute the membrane sector of the complex.

Its subcellular location is the cell inner membrane. The catalysed reaction is a quinone + NADH + 5 H(+)(in) = a quinol + NAD(+) + 4 H(+)(out). In terms of biological role, NDH-1 shuttles electrons from NADH, via FMN and iron-sulfur (Fe-S) centers, to quinones in the respiratory chain. The immediate electron acceptor for the enzyme in this species is believed to be a menaquinone. Couples the redox reaction to proton translocation (for every two electrons transferred, four hydrogen ions are translocated across the cytoplasmic membrane), and thus conserves the redox energy in a proton gradient. In Flavobacterium psychrophilum (strain ATCC 49511 / DSM 21280 / CIP 103535 / JIP02/86), this protein is NADH-quinone oxidoreductase subunit K.